The chain runs to 266 residues: GTP-binding protein Rhes (266 aa).

Gly26–Ser33 is a GTP binding site. Residues Tyr48 to His56 carry the Effector region motif. GTP is bound by residues Asp73–Asn77 and Asn140–Asp143. The segment at Met189–Ala235 is interaction with GNB1, GNB2 and GNB3. Cys263 carries the post-translational modification Cysteine methyl ester. The S-farnesyl cysteine moiety is linked to residue Cys263. A propeptide spans Ser264–Gln266 (removed in mature form).

It belongs to the small GTPase superfamily. RasD family. In terms of assembly, monomer (Potential). Interacts with PIK3CA and UBE2I. Interacts with GNB1, GNB2 and GNB3. In terms of processing, farnesylated. Farnesylation is required for membrane targeting. As to expression, highly expressed in brain; prominently in the striatum and weakly in kidney, thyroid, lung, heart and testis. Not expressed in liver. Expressed in pancreatic cell lines and in a embryonic stem cell line.

Its subcellular location is the cell membrane. In terms of biological role, GTPase signaling protein that binds to and hydrolyzes GTP. Regulates signaling pathways involving G-proteins-coupled receptor and heterotrimeric proteins such as GNB1, GNB2 and GNB3. May be involved in selected striatal competencies, mainly locomotor activity and motor coordination. This chain is GTP-binding protein Rhes (Rasd2), found in Mus musculus (Mouse).